A 232-amino-acid chain; its full sequence is MKERRAPQPVVARCKLVLVGDVQCGKTAMLQVLAKDCYPETYVPTVFENYTACLETEEQRVELSLWDTSGSPYYDNVRPLCYSDSDAVLLCFDISRPETVDSALKKWRTEILDYCPSTRVLLIGCKTDLRTDLSTLMELSHQKQAPISYEQGCAIAKQLGAEIYLEGSAFTSEKSIHSIFRTASMLCLNKPSPLPQKSPVRSLSKRLLHLPSRSELISSTFKKEKAKSCSIM.

GTP is bound by residues 23-28, 38-45, 67-71, 125-128, and 169-170; these read QCGKTA, YPETYVPT, DTSGS, CKTD, and AF. The Effector region motif lies at 42 to 50; sequence YVPTVFENY. Cysteine methyl ester is present on Cys229. The S-geranylgeranyl cysteine moiety is linked to residue Cys229. Residues 230-232 constitute a propeptide, removed in mature form; sequence SIM.

This sequence belongs to the small GTPase superfamily. Rho family. Binds GRB7 and PLXNB1. Interacts with UBXD5. Interacts with PLXNA2. In terms of tissue distribution, mostly expressed in brain and liver.

It is found in the cell membrane. The protein resides in the cytoplasm. Its subcellular location is the cytoskeleton. Its function is as follows. Lacks intrinsic GTPase activity. Has a low affinity for GDP, and constitutively binds GTP. Controls rearrangements of the actin cytoskeleton. Induces the Rac-dependent neuritic process formation in part by disruption of the cortical actin filaments. Causes the formation of many neuritic processes from the cell body with disruption of the cortical actin filaments. This chain is Rho-related GTP-binding protein Rho6 (RND1), found in Homo sapiens (Human).